The chain runs to 352 residues: Phosphoribosylformylglycinamidine cyclo-ligase (352 aa).

The protein belongs to the AIR synthase family.

The protein resides in the cytoplasm. It carries out the reaction 2-formamido-N(1)-(5-O-phospho-beta-D-ribosyl)acetamidine + ATP = 5-amino-1-(5-phospho-beta-D-ribosyl)imidazole + ADP + phosphate + H(+). It participates in purine metabolism; IMP biosynthesis via de novo pathway; 5-amino-1-(5-phospho-D-ribosyl)imidazole from N(2)-formyl-N(1)-(5-phospho-D-ribosyl)glycinamide: step 2/2. The chain is Phosphoribosylformylglycinamidine cyclo-ligase from Pseudomonas entomophila (strain L48).